Consider the following 352-residue polypeptide: Molybdenum import ATP-binding protein ModC (352 aa).

An ABC transporter domain is found at 2-230 (MLEINVKKRL…PLFEPWQEQG (229 aa)). 32–39 (GISGSGKS) is a binding site for ATP. Residues 290-352 (KTSIRNILSG…YAQIKAVSVM (63 aa)) enclose the Mop domain.

Belongs to the ABC transporter superfamily. Molybdate importer (TC 3.A.1.8) family. As to quaternary structure, the complex is composed of two ATP-binding proteins (ModC), two transmembrane proteins (ModB) and a solute-binding protein (ModA).

The protein localises to the cell inner membrane. It carries out the reaction molybdate(out) + ATP + H2O = molybdate(in) + ADP + phosphate + H(+). Its function is as follows. Part of the ABC transporter complex ModABC involved in molybdenum import. Responsible for energy coupling to the transport system. The polypeptide is Molybdenum import ATP-binding protein ModC (Mannheimia succiniciproducens (strain KCTC 0769BP / MBEL55E)).